Consider the following 241-residue polypeptide: 3-deoxy-D-manno-octulosonic acid kinase (241 aa).

D171 is a catalytic residue.

Belongs to the protein kinase superfamily. KdkA/RfaP family.

The protein localises to the cell inner membrane. It carries out the reaction an alpha-Kdo-(2-&gt;6)-lipid IVA + ATP = a 4-O-phospho-alpha-Kdo-(2-&gt;6)-lipid IVA + ADP + H(+). It participates in bacterial outer membrane biogenesis; LPS core biosynthesis. Functionally, catalyzes the ATP-dependent phosphorylation of the 3-deoxy-D-manno-octulosonic acid (Kdo) residue in Kdo-lipid IV(A) at the 4-OH position. The sequence is that of 3-deoxy-D-manno-octulosonic acid kinase from Haemophilus influenzae (strain PittGG).